A 427-amino-acid polypeptide reads, in one-letter code: Putative ABC transporter substrate-binding protein YesO (427 aa).

This sequence belongs to the bacterial solute-binding protein 1 family.

Its function is as follows. May play a role in the degradation of type I rhamnogalacturonan derived from plant cell walls. This Bacillus subtilis (strain 168) protein is Putative ABC transporter substrate-binding protein YesO (yesO).